The following is a 66-amino-acid chain: Toxin Boma6e (66 aa).

Residues 2–64 form the LCN-type CS-alpha/beta domain; sequence RDAYIAQNYN…VPLKVQGKCH (63 aa). Intrachain disulfides connect Cys12-Cys63, Cys22-Cys46, and Cys26-Cys48.

Belongs to the long (3 C-C) scorpion toxin superfamily. Only three disulfide bridges can be formed, because only seven cysteines are present. In terms of tissue distribution, expressed by the venom gland.

Its subcellular location is the secreted. Functionally, binds voltage-independently at site-3 of sodium channels (Nav) and inhibits the inactivation of the activated channels, thereby blocking neuronal transmission. This Buthus occitanus mardochei (Moroccan scorpion) protein is Toxin Boma6e.